We begin with the raw amino-acid sequence, 198 residues long: Endonuclease V (198 aa).

Mg(2+)-binding residues include Asp38 and Asp101.

This sequence belongs to the endonuclease V family. The cofactor is Mg(2+).

The protein localises to the cytoplasm. The enzyme catalyses Endonucleolytic cleavage at apurinic or apyrimidinic sites to products with a 5'-phosphate.. Its function is as follows. DNA repair enzyme involved in the repair of deaminated bases. Selectively cleaves double-stranded DNA at the second phosphodiester bond 3' to a deoxyinosine leaving behind the intact lesion on the nicked DNA. The protein is Endonuclease V of Saccharolobus islandicus (strain M.14.25 / Kamchatka #1) (Sulfolobus islandicus).